Consider the following 199-residue polypeptide: Putative rhomboid protease YdcA (199 aa).

Helical transmembrane passes span Leu14–Leu34, Ile65–Ala85, Phe97–Pro117, His122–Phe142, Ile147–Phe167, and Ile172–Val192. Ser126 (nucleophile) is an active-site residue. His177 (charge relay system) is an active-site residue.

This sequence belongs to the peptidase S54 family.

Its subcellular location is the cell membrane. The polypeptide is Putative rhomboid protease YdcA (ydcA) (Bacillus subtilis (strain 168)).